Here is a 250-residue protein sequence, read N- to C-terminus: Probable replication-associated protein repA2 (250 aa).

It belongs to the IncFII RepA family.

Functionally, this protein is essential for plasmid replication; it is involved in copy control functions. The sequence is that of Probable replication-associated protein repA2 (repA2) from Buchnera aphidicola subsp. Schizaphis graminum (strain Sg).